Here is a 435-residue protein sequence, read N- to C-terminus: MIGGLFIYNHKGEVLIYRVYRDDIGRNAVDAFRVNVIHARQQVRSPVTNIARTSFFHVKRSNIWLAAVTKQNVDAAMVFEFLYKMCDVMAAYFGKISEENIKNNFVLIYELLDEILDFGYPQNSETGALKTFITQQGIKSQHQTKEEQSQITSQVTGQIGWRREGIKYRRNELFLDVLESVNLLMSPQGQVLSAHVSGRVVMKSYLSGMPECKFGMNDKIVIEKQGKGTADETSKSGKQSIAIDDCTFHQCVRLSKSDSERSISFIPPDGEFELMRYRTTKDIILPFRVIPLVREVGRTKLEVKVVIKSNFKPSLLAQKIEVRIPTPLNTSGVQVICMKGKAKYKASENAIVWKIKRMAGMKESQISAEIELLPTNDKKKWARPPISMNFEVPFAPSGLKVRYLKVFEPKLNYSDHDVIKWVRYIGRSGIYETRC.

Ser45 is modified (phosphoserine). Position 156 is a phosphothreonine (Thr156). Residues 170-434 enclose the MHD domain; that stretch reads RNELFLDVLE…IGRSGIYETR (265 aa). Residues Lys341, Lys345, and Lys354 each contribute to the a 1,2-diacyl-sn-glycero-3-phospho-(1D-myo-inositol-3,4,5-trisphosphate) site.

It belongs to the adaptor complexes medium subunit family. Adaptor protein complex 2 (AP-2) is a heterotetramer composed of two large adaptins (alpha-type subunit AP2A1 or AP2A2 and beta-type subunit AP2B1), a medium adaptin (mu-type subunit AP2M1) and a small adaptin (sigma-type subunit AP2S1). Interacts with ATP6V1H and MEGF10. Interacts with EGFR. Interacts with PIP5K1C; tyrosine phosphorylation of PIP5K1C weakens the interaction. Interacts with KIAA0319; required for clathrin-mediated endocytosis of KIAA0319. Interacts with DVL2 (via DEP domain). Interacts with KCNQ1; mediates estrogen-induced internalization via clathrin-coated vesicles. Together with AP2A1 or AP2A2 and AP2B1, it interacts with ADAM10; this interaction facilitates ADAM10 endocytosis from the plasma membrane during long-term potentiation in hippocampal neurons. Probably interacts with ACE2 (via endocytic sorting signal motif); the interaction is inhibited by ACE2 phosphorylation. Interacts with RALBP1; the interaction is direct. Interacts with TMEM106B (via N-terminus). In terms of processing, phosphorylation at Thr-156 increases the affinity of the AP-2 complex for cargo membrane proteins during the initial stages of endocytosis.

It is found in the cell membrane. It localises to the membrane. The protein localises to the coated pit. Component of the adaptor protein complex 2 (AP-2). Adaptor protein complexes function in protein transport via transport vesicles in different membrane traffic pathways. Adaptor protein complexes are vesicle coat components and appear to be involved in cargo selection and vesicle formation. AP-2 is involved in clathrin-dependent endocytosis in which cargo proteins are incorporated into vesicles surrounded by clathrin (clathrin-coated vesicles, CCVs) which are destined for fusion with the early endosome. The clathrin lattice serves as a mechanical scaffold but is itself unable to bind directly to membrane components. Clathrin-associated adaptor protein (AP) complexes which can bind directly to both the clathrin lattice and to the lipid and protein components of membranes are considered to be the major clathrin adaptors contributing the CCV formation. AP-2 also serves as a cargo receptor to selectively sort the membrane proteins involved in receptor-mediated endocytosis. AP-2 seems to play a role in the recycling of synaptic vesicle membranes from the presynaptic surface. AP-2 recognizes Y-X-X-[FILMV] (Y-X-X-Phi) and [ED]-X-X-X-L-[LI] endocytosis signal motifs within the cytosolic tails of transmembrane cargo molecules. AP-2 may also play a role in maintaining normal post-endocytic trafficking through the ARF6-regulated, non-clathrin pathway. During long-term potentiation in hippocampal neurons, AP-2 is responsible for the endocytosis of ADAM10. The AP-2 mu subunit binds to transmembrane cargo proteins; it recognizes the Y-X-X-Phi motifs. The surface region interacting with to the Y-X-X-Phi motif is inaccessible in cytosolic AP-2, but becomes accessible through a conformational change following phosphorylation of AP-2 mu subunit at Thr-156 in membrane-associated AP-2. The membrane-specific phosphorylation event appears to involve assembled clathrin which activates the AP-2 mu kinase AAK1. Plays a role in endocytosis of frizzled family members upon Wnt signaling. This chain is AP-2 complex subunit mu (AP2M1), found in Pongo abelii (Sumatran orangutan).